A 178-amino-acid chain; its full sequence is Probable coatomer subunit zeta-B (178 aa).

This sequence belongs to the adaptor complexes small subunit family. As to quaternary structure, oligomeric complex that consists of at least the alpha, beta, beta', gamma, delta, epsilon and zeta subunits.

Its subcellular location is the cytoplasm. It is found in the golgi apparatus membrane. The protein localises to the cytoplasmic vesicle. The protein resides in the COPI-coated vesicle membrane. In terms of biological role, the coatomer is a cytosolic protein complex that binds to dilysine motifs and reversibly associates with Golgi non-clathrin-coated vesicles, which further mediate biosynthetic protein transport from the ER, via the Golgi up to the trans Golgi network. Coatomer complex is required for budding from Golgi membranes, and is essential for the retrograde Golgi-to-ER transport of dilysine-tagged proteins. The zeta subunit may be involved in regulating the coat assembly and, hence, the rate of biosynthetic protein transport due to its association-dissociation properties with the coatomer complex. The protein is Probable coatomer subunit zeta-B (copZb) of Dictyostelium discoideum (Social amoeba).